Here is a 171-residue protein sequence, read N- to C-terminus: Large ribosomal subunit protein bL9 (171 aa).

The protein belongs to the bacterial ribosomal protein bL9 family.

Its function is as follows. Binds to the 23S rRNA. This chain is Large ribosomal subunit protein bL9, found in Rickettsia typhi (strain ATCC VR-144 / Wilmington).